Reading from the N-terminus, the 980-residue chain is LRR receptor-like serine/threonine-protein kinase SIK1 (980 aa).

The N-terminal stretch at 1–24 is a signal peptide; it reads MAAARAPWLWWWVVVVVGVAVAEA. The Extracellular portion of the chain corresponds to 25-588; that stretch reads ASGGGGGGDG…HGQRVNISKT (564 aa). N-linked (GlcNAc...) asparagine glycosylation is found at asparagine 72 and asparagine 81. LRR repeat units lie at residues 75-98, 99-122, 124-146, 147-170, 171-194, 196-218, 219-242, 243-265, 266-289, 290-312, 314-337, 338-361, 362-385, 387-408, 409-433, 435-457, 458-480, 481-505, 507-529, and 531-554; these read FAVLALNLSNLNLGGEISPAIGEL, KNLQFVDLKGNKLTGQIPDEIGDC, SLKYLDLSGNLLYGDIPFSISKL, KQLEELILKNNQLTGPIPSTLSQI, PNLKTLDLAQNQLTGDIPRLIYWN, VLQYLGLRGNSLTGTLSPDMCQL, TGLWYFDVRGNNLTGTIPESIGNC, TSFEILDISYNQISGEIPYNIGF, LQVATLSLQGNRLTGKIPDVIGLM, QALAVLDLSENELVGPIPSILGN, SYTGKLYLHGNKLTGVIPPELGNM, SKLSYLQLNDNELVGTIPAELGKL, EELFELNLANNNLQGPIPANISSC, ALNKFNVYGNKLNGSIPAGFQK, LESLTYLNLSSNNFKGNIPSELGHI, NLDTLDLSYNEFSGPVPATIGDL, EHLLELNLSKNHLDGPVPAEFGN, LRSVQVIDMSNNNLSGSLPEELGQL, NLDSLILNNNNLVGEIPAQLANC, and SLNNLNLSYNNLSGHVPMAKNFSK. Residues asparagine 230 and asparagine 241 are each glycosylated (N-linked (GlcNAc...) asparagine). Residues asparagine 312 and asparagine 336 are each glycosylated (N-linked (GlcNAc...) asparagine). Residues asparagine 381, asparagine 399, and asparagine 416 are each glycosylated (N-linked (GlcNAc...) asparagine). N-linked (GlcNAc...) asparagine glycans are attached at residues asparagine 464 and asparagine 493. N-linked (GlcNAc...) asparagine glycosylation is found at asparagine 536, asparagine 541, asparagine 551, and asparagine 584. A helical transmembrane segment spans residues 589–609; the sequence is AIACIILGFIILLCVLLLAIY. Topologically, residues 610–980 are cytoplasmic; the sequence is KTNQPQPLVK…FGEVISKHTM (371 aa). The 271-residue stretch at 653–923 folds into the Protein kinase domain; that stretch reads LSEKYIIGYG…EVARVLLSLL (271 aa). ATP is bound by residues 659–667 and lysine 681; that span reads IGYGASSTV. The Proton acceptor role is filled by aspartate 778.

Belongs to the protein kinase superfamily. Ser/Thr protein kinase family. Post-translationally, autophosphorylated. Expressed in nodes, vascular bundles of stems, and anthers.

Its subcellular location is the cell membrane. The catalysed reaction is L-seryl-[protein] + ATP = O-phospho-L-seryl-[protein] + ADP + H(+). It carries out the reaction L-threonyl-[protein] + ATP = O-phospho-L-threonyl-[protein] + ADP + H(+). Its function is as follows. Receptor kinase involved in salt drought stress responses. Acts as a positive regulator of salt and drought tolerance. May promote salt and drought tolerance through the induction of the activities of antioxidative enzymes, such as peroxidase, superoxide dismutase and catalase. May be involved in the control of stomatal development in leaf epidermis. Possesses kinase activity in vitro. Does not seem to be involved in heat tolerance. The chain is LRR receptor-like serine/threonine-protein kinase SIK1 from Oryza sativa subsp. japonica (Rice).